A 142-amino-acid chain; its full sequence is Glia maturation factor gamma (142 aa).

Ser2 is subject to N-acetylserine. An ADF-H domain is found at 4–139 (SLVVCDVDPE…NETWLKEKLA (136 aa)).

This sequence belongs to the actin-binding proteins ADF family. GMF subfamily. Expressed in rat thymus, testis, and spleen. Is present predominantly in proliferative and differentiative organs.

The sequence is that of Glia maturation factor gamma (Gmfg) from Rattus norvegicus (Rat).